A 134-amino-acid polypeptide reads, in one-letter code: Holo-[acyl-carrier-protein] synthase (134 aa).

Positions 8 and 58 each coordinate Mg(2+).

The protein belongs to the P-Pant transferase superfamily. AcpS family. Mg(2+) is required as a cofactor.

It is found in the cytoplasm. The enzyme catalyses apo-[ACP] + CoA = holo-[ACP] + adenosine 3',5'-bisphosphate + H(+). Its function is as follows. Transfers the 4'-phosphopantetheine moiety from coenzyme A to a Ser of acyl-carrier-protein. The sequence is that of Holo-[acyl-carrier-protein] synthase from Ruminiclostridium cellulolyticum (strain ATCC 35319 / DSM 5812 / JCM 6584 / H10) (Clostridium cellulolyticum).